Consider the following 466-residue polypeptide: ATP synthase subunit beta (466 aa).

156–163 (GGAGVGKT) is a binding site for ATP.

This sequence belongs to the ATPase alpha/beta chains family. As to quaternary structure, F-type ATPases have 2 components, CF(1) - the catalytic core - and CF(0) - the membrane proton channel. CF(1) has five subunits: alpha(3), beta(3), gamma(1), delta(1), epsilon(1). CF(0) has three main subunits: a(1), b(2) and c(9-12). The alpha and beta chains form an alternating ring which encloses part of the gamma chain. CF(1) is attached to CF(0) by a central stalk formed by the gamma and epsilon chains, while a peripheral stalk is formed by the delta and b chains.

Its subcellular location is the cell inner membrane. It carries out the reaction ATP + H2O + 4 H(+)(in) = ADP + phosphate + 5 H(+)(out). In terms of biological role, produces ATP from ADP in the presence of a proton gradient across the membrane. The catalytic sites are hosted primarily by the beta subunits. The polypeptide is ATP synthase subunit beta (Polynucleobacter necessarius subsp. necessarius (strain STIR1)).